The chain runs to 270 residues: Sulfur carrier protein FdhD (270 aa).

Cys-116 (cysteine persulfide intermediate) is an active-site residue. 253–258 (FAREGK) provides a ligand contact to Mo-bis(molybdopterin guanine dinucleotide).

The protein belongs to the FdhD family.

Its subcellular location is the cytoplasm. In terms of biological role, required for formate dehydrogenase (FDH) activity. Acts as a sulfur carrier protein that transfers sulfur from IscS to the molybdenum cofactor prior to its insertion into FDH. The polypeptide is Sulfur carrier protein FdhD (Haemophilus influenzae (strain ATCC 51907 / DSM 11121 / KW20 / Rd)).